A 659-amino-acid chain; its full sequence is Putative RING finger protein R311 (659 aa).

Residues Cys502–Met540 form an RING-type zinc finger.

The chain is Putative RING finger protein R311 from Acanthamoeba polyphaga (Amoeba).